Consider the following 450-residue polypeptide: MQSIFGTDGIRGRFNEEITYSLAYKVGYALGSNLENNNPILIGRDTRISGDILLHAITKGINASGKKFINLGICPTPAIPFLIKQEQLSSGIMISASHNPPEYNGIKIFDHNGQKITKNFENKIQKFIEESNQNISVTTKEISLKANKELMDIYMKSLIQSMGGENLSGMKIILDTCYGSATTCAKKIFQSLGADVRVLNNSKNGLKINVNCGSTNLEPLKKALRQSPADMGFSFDGDSDRVIGLDSKGNVLDGDHILFLWGRELMEQKILTNNLLISTQMANLGFEEAWNKIGGLLYRTDVGDKYVHDAIKEKRAVLGGEQSGHILSKINNFSGDGILTALQISKYCKKKNITLNNWLKTSFEPFPQKLTNINLNFNINKVNQKTRILINQTTENFQKIYSDNCRIYIRPSGTEPLMRVLVEAKSHKKVDSLSSEIANKLILEINKIMN.

Residue serine 97 is the Phosphoserine intermediate of the active site. Mg(2+) is bound by residues serine 97, aspartate 236, aspartate 238, and aspartate 240. The residue at position 97 (serine 97) is a Phosphoserine.

This sequence belongs to the phosphohexose mutase family. Mg(2+) serves as cofactor. Post-translationally, activated by phosphorylation.

It carries out the reaction alpha-D-glucosamine 1-phosphate = D-glucosamine 6-phosphate. Its function is as follows. Catalyzes the conversion of glucosamine-6-phosphate to glucosamine-1-phosphate. The protein is Phosphoglucosamine mutase of Prochlorococcus marinus (strain MIT 9312).